The chain runs to 377 residues: Succinyl-diaminopimelate desuccinylase (377 aa).

H66 lines the Zn(2+) pocket. Residue D68 is part of the active site. Position 99 (D99) interacts with Zn(2+). E133 acts as the Proton acceptor in catalysis. Positions 134, 162, and 348 each coordinate Zn(2+).

The protein belongs to the peptidase M20A family. DapE subfamily. In terms of assembly, homodimer. It depends on Zn(2+) as a cofactor. The cofactor is Co(2+).

It catalyses the reaction N-succinyl-(2S,6S)-2,6-diaminopimelate + H2O = (2S,6S)-2,6-diaminopimelate + succinate. The protein operates within amino-acid biosynthesis; L-lysine biosynthesis via DAP pathway; LL-2,6-diaminopimelate from (S)-tetrahydrodipicolinate (succinylase route): step 3/3. Catalyzes the hydrolysis of N-succinyl-L,L-diaminopimelic acid (SDAP), forming succinate and LL-2,6-diaminopimelate (DAP), an intermediate involved in the bacterial biosynthesis of lysine and meso-diaminopimelic acid, an essential component of bacterial cell walls. This chain is Succinyl-diaminopimelate desuccinylase, found in Chromobacterium violaceum (strain ATCC 12472 / DSM 30191 / JCM 1249 / CCUG 213 / NBRC 12614 / NCIMB 9131 / NCTC 9757 / MK).